We begin with the raw amino-acid sequence, 260 residues long: Small ribosomal subunit protein uS2 (260 aa).

The segment at 224–260 (GRQGQDAGEDSAEKTFADTADGEGDFEESSNNENQEA) is disordered. A compositionally biased stretch (acidic residues) spans 243-260 (ADGEGDFEESSNNENQEA).

It belongs to the universal ribosomal protein uS2 family.

This is Small ribosomal subunit protein uS2 from Oenococcus oeni (strain ATCC BAA-331 / PSU-1).